Reading from the N-terminus, the 150-residue chain is Ribonuclease K6 (150 aa).

A signal peptide spans 1-23; the sequence is MVLCFPLLLLLLVLWGQVCPLHA. The active-site Proton acceptor is His38. 4 cysteine pairs are disulfide-bonded: Cys46-Cys104, Cys60-Cys114, Cys78-Cys129, and Cys85-Cys92. Asn55 carries an N-linked (GlcNAc...) asparagine glycan. Residues 61-65 and Lys86 contribute to the substrate site; that span reads KPQNT. The N-linked (GlcNAc...) asparagine glycan is linked to Asn100. Arg105 provides a ligand contact to substrate. The Proton donor role is filled by His145.

It belongs to the pancreatic ribonuclease family. Interacts (via N-terminus) with bacterial lipopolysaccharide (LPS).

The protein resides in the secreted. Its subcellular location is the lysosome. It localises to the cytoplasmic granule. Its function is as follows. Ribonuclease which shows a preference for the pyrimidines uridine and cytosine. Has potent antibacterial activity against a range of Gram-positive and Gram-negative bacteria, including P.aeruginosa, A.baumanii, M.luteus, S.aureus, E.faecalis, E.faecium, S.saprophyticus and E.coli. Causes loss of bacterial membrane integrity, and also promotes agglutination of Gram-negative bacteria. Probably contributes to urinary tract sterility. Bactericidal activity is independent of RNase activity. The sequence is that of Ribonuclease K6 (RNASE6) from Saimiri sciureus (Common squirrel monkey).